A 62-amino-acid chain; its full sequence is Large ribosomal subunit protein uL30 (62 aa).

The protein belongs to the universal ribosomal protein uL30 family. In terms of assembly, part of the 50S ribosomal subunit.

In Prosthecochloris aestuarii (strain DSM 271 / SK 413), this protein is Large ribosomal subunit protein uL30.